A 408-amino-acid chain; its full sequence is Protein ZNF365 (408 aa).

Position 16 is a phosphoserine (S16). The C2H2-type; degenerate zinc finger occupies 26-51; sequence FRCPRCGDHTRFRSLSSLRAHLEFSH. S139 and S146 each carry phosphoserine. Residues 170–298 adopt a coiled-coil conformation; it reads VEAVDRTIEK…QLEYYQSQQA (129 aa). T176 is modified (phosphothreonine). S370 carries the phosphoserine modification.

In terms of assembly, homodimer. Interacts with NDE1 and NDEL1. Interacts with DISC1. Interacts with PARP1. Interacts with MCRS1. As to expression, detected in several tissues, with highest levels in brain. Also expressed during embryonic development. Expressed in cerebral cortex, hippocampus, striatum, inferior colliculus and thalamus.

The protein localises to the cytoplasm. Its subcellular location is the cytoskeleton. It is found in the microtubule organizing center. It localises to the centrosome. Contributes to genomic stability by preventing telomere dysfunction. Involved in the morphogenesis of basket cells in the somatosensory cortex during embryogenesis. Involved in the positive regulation of oligodendrocyte differentiation during postnatal growth. Involved in dendritic arborization, morphogenesis of spine density dendrite, and establishment of postsynaptic dendrite density in cortical pyramidal neurons. Involved in the regulation of neurogenesis. Negatively regulates neurite outgrowth. Involved in homologous recombination (HR) repair pathway. Required for proper resolution of DNA double-strand breaks (DSBs) by HR. Is required for recovery of stalled replication forks, and directly contributes to genomic stability. Interacts with PARP1 and mediates MRE11-dependent DNA end resection during replication fork recovery. The chain is Protein ZNF365 (Znf365) from Mus musculus (Mouse).